The sequence spans 329 residues: Telomeric repeat-binding factor 2-interacting protein 1 (329 aa).

Residues 63-86 (AVSTDYVVACVESQRRLPLDLYRH) enclose the BRCT domain. A Myb-like domain is found at 94–153 (ASPRGRLPFTEAEDAALLRAVRERSGAPRVSGTALWKELECTGLTRHSWQAMRDRYLRHL). Residues 179-206 (EFESSESGSDTSDTPDELPLQNGEGTFP) form a disordered region. A Nuclear localization signal motif is present at residues 313–329 (AKFGAENVARRVAFRKS).

Belongs to the RAP1 family. Homodimer. Component of the shelterin complex (telosome). Interacts with terf2; the interaction is direct.

The protein localises to the nucleus. It localises to the chromosome. The protein resides in the telomere. In terms of biological role, acts both as a regulator of telomere function and as a transcription regulator. Involved in the regulation of telomere length and protection as a component of the shelterin complex (telosome). Does not bind DNA directly: recruited to telomeric double-stranded 5'-TTAGGG-3' repeats via its interaction with terf2. Independently of its function in telomeres, also acts as a transcription regulator: recruited to extratelomeric 5'-TTAGGG-3' sites via its association with terf2 or other factors, and regulates gene expression. The chain is Telomeric repeat-binding factor 2-interacting protein 1 (TERF2IP) from Gallus gallus (Chicken).